Consider the following 166-residue polypeptide: Packaging efficiency factor P6 (166 aa).

A disordered region spans residues 134–166; sequence ILPESAGDQQEAEPVPSVGDQQETAPRKRFRAI.

In terms of assembly, heterodimer of P6 and P9; further multimerizes as hexamers of heterodimers. Part of the dodecameric portal complex that is composed of the packaging efficiency factor P6, the DNA packaging ATPase P9, and the internal heterododecamer P20/P22 which spans the virion inner membrane.

It is found in the virion. Its function is as follows. Together with the packaging ATPase P9, forms the external part of the portal vertex that is embeded in the capsid and which plays critical roles in genome packaging and genome ejection. Both proteins multimerize as a single ring-shaped heterdodecamer arranged around a central channel. The sequence is that of Packaging efficiency factor P6 (VI) from Acinetobacter calcoaceticus (Arthrobacter siderocapsulatus).